The primary structure comprises 578 residues: Transmembrane protein 121B (578 aa).

Disordered stretches follow at residues 1–84 and 106–129; these read MRPA…ESLS and AGPA…PTSS. Composition is skewed to low complexity over residues 8–17 and 44–53; these read PRSVSSASGS and GDSSTSTSTS. Residues 54–67 show a composition bias toward gly residues; that stretch reads RGGGGGRRGGGGGS. Ser167 carries the phosphoserine modification. The interval 529–557 is disordered; that stretch reads RARGGYGAPPSAPPPPPPPPQGGSQLGHC. The span at 538–549 shows a compositional bias: pro residues; that stretch reads PSAPPPPPPPPQ. A Phosphoserine modification is found at Ser552.

It belongs to the TMEM121 family. Widely expressed, especially in adult heart, brain, prostate, testes, peripherical blood leukocytes and fetal brain.

The polypeptide is Transmembrane protein 121B (Homo sapiens (Human)).